The chain runs to 295 residues: Tyrosine recombinase XerD (295 aa).

The 85-residue stretch at 1-85 (MNTIIEEYLN…TIRSFHQFAL (85 aa)) folds into the Core-binding (CB) domain. The Tyr recombinase domain occupies 106–289 (KLPDVLEIDE…SKSQIRKMYT (184 aa)). Catalysis depends on residues Arg146, Lys170, His241, Arg244, and His267. Tyr276 (O-(3'-phospho-DNA)-tyrosine intermediate) is an active-site residue.

Belongs to the 'phage' integrase family. XerD subfamily. In terms of assembly, forms a cyclic heterotetrameric complex composed of two molecules of XerC and two molecules of XerD.

The protein localises to the cytoplasm. Functionally, site-specific tyrosine recombinase, which acts by catalyzing the cutting and rejoining of the recombining DNA molecules. The XerC-XerD complex is essential to convert dimers of the bacterial chromosome into monomers to permit their segregation at cell division. It also contributes to the segregational stability of plasmids. The protein is Tyrosine recombinase XerD of Staphylococcus epidermidis (strain ATCC 12228 / FDA PCI 1200).